We begin with the raw amino-acid sequence, 321 residues long: tRNA U34 carboxymethyltransferase (321 aa).

Carboxy-S-adenosyl-L-methionine-binding positions include K90, W104, K109, G129, 151 to 153 (DPT), 180 to 181 (IE), M195, Y199, and R314.

The protein belongs to the class I-like SAM-binding methyltransferase superfamily. CmoB family. As to quaternary structure, homotetramer.

It carries out the reaction carboxy-S-adenosyl-L-methionine + 5-hydroxyuridine(34) in tRNA = 5-carboxymethoxyuridine(34) in tRNA + S-adenosyl-L-homocysteine + H(+). Catalyzes carboxymethyl transfer from carboxy-S-adenosyl-L-methionine (Cx-SAM) to 5-hydroxyuridine (ho5U) to form 5-carboxymethoxyuridine (cmo5U) at position 34 in tRNAs. This chain is tRNA U34 carboxymethyltransferase, found in Haemophilus influenzae (strain PittEE).